We begin with the raw amino-acid sequence, 499 residues long: Serine/threonine-protein phosphatase 5 (499 aa).

Residues Met-1–Gly-23 form a disordered region. Ala-2 bears the N-acetylalanine mark. TPR repeat units lie at residues Ala-28 to Asn-61, Ala-62 to Tyr-95, and Ile-96 to Asp-129. The catalytic stretch occupies residues Gly-184 to Met-499. Mn(2+) is bound by residues Asp-242, His-244, and Asp-271. Substrate is bound at residue His-244. Residues Arg-275 and Asn-303–His-304 each bind substrate. Asn-303 is a Mn(2+) binding site. His-304 serves as the catalytic Proton donor/acceptor. His-352 provides a ligand contact to Mn(2+). Residues Arg-400 and His-427 each contribute to the substrate site. His-427 lines the Mn(2+) pocket. The interval Gln-495 to Met-499 is required for autoinhibition.

Belongs to the PPP phosphatase family. PP-5 (PP-T) subfamily. In terms of assembly, probably forms a complex composed of chaperones HSP90 and HSP70, co-chaperones STIP1/HOP, CDC37, PPP5C, PTGES3/p23, TSC1 and client protein TSC2. Probably forms a complex composed of chaperones HSP90 and HSP70, co-chaperones CDC37, PPP5C, TSC1 and client protein TSC2, CDK4, AKT, RAF1 and NR3C1; this complex does not contain co-chaperones STIP1/HOP and PTGES3/p23. Part of a complex with HSP90/HSP90AA1 and steroid receptors. Interacts (via TPR repeats) with HSP90AA1 (via TPR repeat-binding motif) or HSPA1A/HSPA1B; the interaction is direct and activates the phosphatase activity. Dissociates from HSPA1A/HSPA1B and HSP90AA1 in response to arachidonic acid. Interacts with CPNE1 (via VWFA domain). Interacts with CDC16, CDC27. Interacts with KLHDC10 (via the 6 Kelch repeats); inhibits the phosphatase activity on MAP3K5. Interacts with ATM and ATR; both interactions are induced by DNA damage and enhance ATM and ATR kinase activity. Interacts with RAD17; reduced by DNA damage. Interacts with nuclear receptors such as NR3C1/GCR and PPARG (activated by agonist); regulates their transactivation activities. Interacts (via TPR repeats) with S100 proteins S100A1, S100A2, S100A6, S100B and S100P; the interactions are calcium-dependent, strongly activate PPP5C phosphatase activity and compete with HSP90AA1 and MAP3K5 interactions. Interacts with SMAD2 and SMAD3 but not with SMAD1; decreases SMAD3 phosphorylation and protein levels. Interacts (via TPR repeats) with CRY1 and CRY2; the interaction with CRY2 down-regulates the phosphatase activity on CSNK1E. Interacts (via TPR repeats) with the active form of RAC1, GNA12 or GNA13; these interactions activate the phosphatase activity and translocate PPP5C to the cell membrane. Interacts with FLCN. The cofactor is Mg(2+). Mn(2+) is required as a cofactor. Activated by at least two different proteolytic cleavages producing a 56 kDa and a 50 kDa form. In terms of tissue distribution, ubiquitous.

It is found in the nucleus. The protein localises to the cytoplasm. The protein resides in the cell membrane. It catalyses the reaction O-phospho-L-seryl-[protein] + H2O = L-seryl-[protein] + phosphate. The catalysed reaction is O-phospho-L-threonyl-[protein] + H2O = L-threonyl-[protein] + phosphate. Its activity is regulated as follows. Autoinhibited. In the autoinhibited state, the TPR domain interacts with the catalytic region and prevents substrate access to the catalytic pocket. Allosterically activated by various polyunsaturated fatty acids, free long-chain fatty-acids and long-chain fatty acyl-CoA esters, arachidonic acid being the most effective activator. HSP90A and probably RAC1, GNA12 and GNA13 can also release the autoinhibition by the TPR repeat. Activation by RAC1, GNA12 and GNA13 is synergistic with the one produced by fatty acids binding. Inhibited by okadaic acid. Serine/threonine-protein phosphatase that dephosphorylates a myriad of proteins involved in different signaling pathways including the kinases CSNK1E, ASK1/MAP3K5, PRKDC and RAF1, the nuclear receptors NR3C1, PPARG, ESR1 and ESR2, SMAD proteins and TAU/MAPT. Implicated in wide ranging cellular processes, including apoptosis, differentiation, DNA damage response, cell survival, regulation of ion channels or circadian rhythms, in response to steroid and thyroid hormones, calcium, fatty acids, TGF-beta as well as oxidative and genotoxic stresses. Participates in the control of DNA damage response mechanisms such as checkpoint activation and DNA damage repair through, for instance, the regulation ATM/ATR-signaling and dephosphorylation of PRKDC and TP53BP1. Inhibits ASK1/MAP3K5-mediated apoptosis induced by oxidative stress. Plays a positive role in adipogenesis, mainly through the dephosphorylation and activation of PPARG transactivation function. Also dephosphorylates and inhibits the anti-adipogenic effect of NR3C1. Regulates the circadian rhythms, through the dephosphorylation and activation of CSNK1E. May modulate TGF-beta signaling pathway by the regulation of SMAD3 phosphorylation and protein expression levels. Dephosphorylates and may play a role in the regulation of TAU/MAPT. Through their dephosphorylation, may play a role in the regulation of ions channels such as KCNH2. Dephosphorylate FNIP1, disrupting interaction with HSP90AA1/Hsp90. The polypeptide is Serine/threonine-protein phosphatase 5 (PPP5C) (Homo sapiens (Human)).